The following is an 84-amino-acid chain: Large ribosomal subunit protein bL31B (84 aa).

This sequence belongs to the bacterial ribosomal protein bL31 family. Type B subfamily. Part of the 50S ribosomal subunit.

The sequence is that of Large ribosomal subunit protein bL31B from Bacteroides thetaiotaomicron (strain ATCC 29148 / DSM 2079 / JCM 5827 / CCUG 10774 / NCTC 10582 / VPI-5482 / E50).